We begin with the raw amino-acid sequence, 215 residues long: Vesicle transport protein SFT2C (215 aa).

Residues 1–82 lie on the Cytoplasmic side of the membrane; that stretch reads MADLHRQLQE…RGQRLAAGGG (82 aa). The chain crosses the membrane as a helical span at residues 83-103; the sequence is CLLLAALCFGLAALYAPVLLL. Over 104–107 the chain is Lumenal; sequence RARK. The chain crosses the membrane as a helical span at residues 108-128; it reads FALLWSLGSALALAGSALLRG. The Cytoplasmic segment spans residues 129 to 142; that stretch reads GAACGRLLRCEEAP. A helical transmembrane segment spans residues 143-163; that stretch reads SRPALLYMAALGATLFAALGL. Residues 164–166 lie on the Lumenal side of the membrane; it reads RST. The helical transmembrane segment at 167-187 threads the bilayer; it reads LLTVLGAGAQVAALLAALVGL. Residues 188-215 lie on the Cytoplasmic side of the membrane; that stretch reads LPWGGGTALRLALGRLGRGAGLAKVLPV.

The protein belongs to the SFT2 family.

It localises to the membrane. Its function is as follows. May be involved in fusion of retrograde transport vesicles derived from an endocytic compartment with the Golgi complex. The protein is Vesicle transport protein SFT2C of Homo sapiens (Human).